Here is a 768-residue protein sequence, read N- to C-terminus: C-type polyheme cytochrome OmcC (768 aa).

Positions 1-23 (MSRKVTKYSAVLAVSLFAAALAG) are cleaved as a signal peptide. C24 is lipidated: N-palmitoyl cysteine. A lipid anchor (S-diacylglycerol cysteine) is attached at C24. Residues C48, C51, H52, C80, C83, H84, C112, C115, H116, C148, C151, H152, C193, C196, H197, C238, C241, H242, C320, C323, H324, C405, C408, H409, C454, C457, H458, C504, C507, H508, C579, C582, H583, C611, C614, and H615 each coordinate heme c.

Binds 12 heme c groups per subunit.

Its subcellular location is the cell outer membrane. Not involved in Fe(3+) reduction. The protein is C-type polyheme cytochrome OmcC (omcC) of Geobacter sulfurreducens (strain ATCC 51573 / DSM 12127 / PCA).